A 257-amino-acid polypeptide reads, in one-letter code: Snake venom serine protease 2C (257 aa).

Positions 1–18 are cleaved as a signal peptide; sequence MVLIRVLANLLILQLSYA. Residues 19 to 24 constitute a propeptide that is removed on maturation; the sequence is QKSSEL. The 224-residue stretch at 25–248 folds into the Peptidase S1 domain; the sequence is VIGGHPCNIN…HLDWIKSIIA (224 aa). 6 cysteine pairs are disulfide-bonded: C31–C162, C49–C65, C97–C255, C141–C209, C173–C188, and C199–C224. Residues H64 and D109 each act as charge relay system in the active site. Residues N116, N120, and N121 are each glycosylated (N-linked (GlcNAc...) asparagine). S203 acts as the Charge relay system in catalysis.

The protein belongs to the peptidase S1 family. Snake venom subfamily. As to quaternary structure, monomer. Expressed by the venom gland.

The protein localises to the secreted. Snake venom serine protease that may act in the hemostasis system of the prey. This chain is Snake venom serine protease 2C (TLG2C), found in Craspedocephalus gramineus (Bamboo pit viper).